The sequence spans 869 residues: Histone deacetylase 4 (869 aa).

3 disordered regions span residues 1–25 (MEEA…PSTS), 128–167 (SSSN…TISQ), and 180–218 (RSKG…QVNV). A compositionally biased stretch (polar residues) spans 184–202 (ESNSQSNLMSNSVTANGNG). Ser251 bears the Phosphoserine mark. The histone deacetylase stretch occupies residues 460 to 802 (CTTGLGYDQA…VQALIGESDD (343 aa)). His608 is an active-site residue.

The protein belongs to the histone deacetylase family. HD type 2 subfamily. As to quaternary structure, interacts with mef-2. In terms of processing, phosphorylated by serine/threonine-protein kinase kin-29 at Ser-251; the phosphorylation inhibits repression of transcription by mef-2. May be phosphorylated by either cyclic-AMP dependent or cyclic-GMP dependent protein kinases. As to expression, expressed in body-wall muscle cells, hypodermal seam cells and neuronal cells including sensory amphid neuronal processes, the nerve ring, ventral nerve cords and motor neuronal commissures.

The protein resides in the nucleus. The catalysed reaction is N(6)-acetyl-L-lysyl-[histone] + H2O = L-lysyl-[histone] + acetate. In terms of biological role, responsible for the deacetylation of lysine residues on the N-terminal part of the core histones (H2A, H2B, H3 and H4). Histone deacetylation gives a tag for epigenetic repression and plays an important role in transcriptional regulation, cell cycle progression and developmental events. Histone deacetylases act via the formation of large multiprotein complexes. Involved in transduction of sensory signals, together with egl-4, kin-29 and mef-2; binding to transcription factor mef-2 enables negative modulation of chemoreceptor gene expression in chemosensory neurons. May be involved in muscle development. The polypeptide is Histone deacetylase 4 (hda-4) (Caenorhabditis elegans).